The primary structure comprises 1179 residues: Integrin alpha-1 (1179 aa).

The signal sequence occupies residues 1-28 (MVPRRPASLEVTVACIWLLTVILGVCIS). Residues 29–1141 (FNVDVKNSMS…SKDGLPGRVP (1113 aa)) are Extracellular-facing. The FG-GAP 1 repeat unit spans residues 30–91 (NVDVKNSMSF…CPVGRERSMP (62 aa)). Cys82 and Cys92 are disulfide-bonded. 9 N-linked (GlcNAc...) asparagine glycosylation sites follow: Asn100, Asn105, Asn112, Asn217, Asn317, Asn341, Asn402, Asn418, and Asn459. The stretch at 101–160 (TSIPNVTEIKENMTFGSTLVTNPKGGFLACGPLYAYRCGHLHYTTGICSDVSPTFQVVNS) is one FG-GAP 2 repeat. The VWFA domain occupies 175–364 (IVLDGSNSIY…LGERIFALEA (190 aa)). Residues 365 to 417 (TADQSAASFEMEMSQTGFSAHYSQDWVMLGAVGAYDWNGTVVMQKANQIVIPH) form an FG-GAP 3 repeat. 4 FG-GAP repeats span residues 422–474 (QTEP…DGDV), 475–537 (NILQ…RFEY), 556–614 (SCTK…TIRK), and 618–678 (QRIP…FEPN). Ca(2+) is bound by residues Asp497, Asp499, Asp501, and Asp505. An N-linked (GlcNAc...) asparagine glycan is attached at Asn531. Residues Asp579, Asn581, Asp583, Asp587, Asp641, Asn643, Asp645, and Asp649 each coordinate Ca(2+). Cys687 and Cys696 form a disulfide bridge. Asn698, Asn747, and Asn779 each carry an N-linked (GlcNAc...) asparagine glycan. Cys702 and Cys755 form a disulfide bridge. A disulfide bridge links Cys807 with Cys813. 7 N-linked (GlcNAc...) asparagine glycosylation sites follow: Asn839, Asn882, Asn907, Asn938, Asn965, Asn973, and Asn1007. A disulfide bond links Cys877 and Cys885. Disulfide bonds link Cys1029–Cys1062 and Cys1065–Cys1072. Asn1083, Asn1102, and Asn1113 each carry an N-linked (GlcNAc...) asparagine glycan. A helical transmembrane segment spans residues 1142-1164 (LWVILLSAFAGLLLLMLLILALW). Residues 1165 to 1179 (KIGFFKRPLKKKMEK) lie on the Cytoplasmic side of the membrane. Positions 1167-1171 (GFFKR) match the GFFKR motif motif.

The protein belongs to the integrin alpha chain family. As to quaternary structure, heterodimer of an alpha and a beta subunit. Alpha-1 associates with beta-1. Interacts with RAB21. Interacts (via cytoplasmic domain) with PTPN2; activates PTPN2 phosphatase activity towards EGFR and negatively regulates EGF signaling.

It is found in the membrane. Functionally, integrin alpha-1/beta-1 is a receptor for laminin and collagen. It recognizes the proline-hydroxylated sequence G-F-P-G-E-R in collagen. Involved in anchorage-dependent, negative regulation of EGF-stimulated cell growth. The polypeptide is Integrin alpha-1 (Itga1) (Mus musculus (Mouse)).